The following is a 912-amino-acid chain: Probable dipeptidyl-aminopeptidase B (912 aa).

The segment at 1–74 (MSSALSPEGD…GPFLGPGASL (74 aa)) is disordered. Topologically, residues 1-85 (MSSALSPEGD…REPMDRGLRR (85 aa)) are cytoplasmic. Positions 16-27 (DSLSSVSTTSLV) are enriched in low complexity. A compositionally biased stretch (basic and acidic residues) spans 30 to 50 (RIQEKTEMDADNDKEKDPRAL). The span at 51–63 (DDEDPLRDEDDLE) shows a compositional bias: acidic residues. Residues 86-106 (ILIIVAVVFIGGWLAGLGIFI) form a helical; Signal-anchor for type II membrane protein membrane-spanning segment. The Vacuolar portion of the chain corresponds to 107–912 (ASGSYHHESD…KRHMVPQALV (806 aa)). An N-linked (GlcNAc...) asparagine glycan is attached at asparagine 344. Serine 749 (charge relay system) is an active-site residue. An N-linked (GlcNAc...) asparagine glycan is attached at asparagine 808. Active-site charge relay system residues include aspartate 826 and histidine 859. The interval 892–912 (PQPQKDPVEKEKRHMVPQALV) is disordered.

It belongs to the peptidase S9B family.

Its subcellular location is the vacuole membrane. It carries out the reaction Release of an N-terminal dipeptide, Xaa-Yaa-|-Zaa-, from a polypeptide, preferentially when Yaa is Pro, provided Zaa is neither Pro nor hydroxyproline.. Functionally, type IV dipeptidyl-peptidase which removes N-terminal dipeptides sequentially from polypeptides having unsubstituted N-termini provided that the penultimate residue is proline. In Fusarium vanettenii (strain ATCC MYA-4622 / CBS 123669 / FGSC 9596 / NRRL 45880 / 77-13-4) (Fusarium solani subsp. pisi), this protein is Probable dipeptidyl-aminopeptidase B (DAPB).